A 346-amino-acid polypeptide reads, in one-letter code: Biotin synthase (346 aa).

One can recognise a Radical SAM core domain in the interval 38–256; that stretch reads QQVQVSTLLS…IAVARIMMPT (219 aa). Residues Cys-53, Cys-57, and Cys-60 each coordinate [4Fe-4S] cluster. Positions 97, 128, 188, and 260 each coordinate [2Fe-2S] cluster.

The protein belongs to the radical SAM superfamily. Biotin synthase family. As to quaternary structure, homodimer. [4Fe-4S] cluster is required as a cofactor. It depends on [2Fe-2S] cluster as a cofactor.

The catalysed reaction is (4R,5S)-dethiobiotin + (sulfur carrier)-SH + 2 reduced [2Fe-2S]-[ferredoxin] + 2 S-adenosyl-L-methionine = (sulfur carrier)-H + biotin + 2 5'-deoxyadenosine + 2 L-methionine + 2 oxidized [2Fe-2S]-[ferredoxin]. The protein operates within cofactor biosynthesis; biotin biosynthesis; biotin from 7,8-diaminononanoate: step 2/2. Catalyzes the conversion of dethiobiotin (DTB) to biotin by the insertion of a sulfur atom into dethiobiotin via a radical-based mechanism. This chain is Biotin synthase, found in Salmonella gallinarum (strain 287/91 / NCTC 13346).